The primary structure comprises 115 residues: C-type natriuretic peptide prohormone (115 aa).

Residues 24–49 (PSDELNNEAEEMSPAASLPELNADQS) are disordered. A disulfide bond links C99 and C115.

The protein belongs to the natriuretic peptide family. In terms of tissue distribution, CNP-115 is differentially processed to produce CNP-38 and CNP-39 in the heart and CNP-22 in the brain.

It localises to the secreted. In terms of biological role, hormone which may be vasoactive and natriuretic. Has a cGMP-stimulating activity. This is C-type natriuretic peptide prohormone from Scyliorhinus canicula (Small-spotted catshark).